Reading from the N-terminus, the 159-residue chain is Phospholipase A2 AP-PLA2-I (159 aa).

Residues 1 to 19 form the signal peptide; sequence MNFLVVIVTTVSLAGAASA. The propeptide occupies 20–23; sequence GEIQ. Cystine bridges form between cysteine 51–cysteine 159, cysteine 53–cysteine 69, cysteine 68–cysteine 139, cysteine 75–cysteine 132, cysteine 85–cysteine 125, and cysteine 110–cysteine 130. Residues tyrosine 52, glycine 54, and glycine 56 each contribute to the Ca(2+) site. Histidine 72 is an active-site residue. Residue aspartate 73 participates in Ca(2+) binding. Aspartate 133 is a catalytic residue.

This sequence belongs to the phospholipase A2 family. Group I subfamily. Homodimer. Ca(2+) is required as a cofactor. As to expression, expressed by the venom gland.

It localises to the secreted. It catalyses the reaction a 1,2-diacyl-sn-glycero-3-phosphocholine + H2O = a 1-acyl-sn-glycero-3-phosphocholine + a fatty acid + H(+). Starfish phospholipase A2 (PLA2) that has hemorrhagic and capillary permeability-increasing activities and hence is considered to be deeply involved in the local inflammation. Shows hemolytic activity only in the presence of phosphatidylcholine (PC). PLA2 catalyzes the calcium-dependent hydrolysis of the 2-acyl groups in 3-sn-phosphoglycerides. This Acanthaster planci (Crown-of-thorns starfish) protein is Phospholipase A2 AP-PLA2-I.